We begin with the raw amino-acid sequence, 290 residues long: Small ribosomal subunit biogenesis GTPase RsgA (290 aa).

The CP-type G domain occupies 62-213; sequence KNSLVRPPIV…IADTPGFSSL (152 aa). Residues 111–114 and 156–164 contribute to the GTP site; these read SKMD and GQTGVGKST. Zn(2+) is bound by residues cysteine 237, cysteine 242, histidine 244, and cysteine 250.

This sequence belongs to the TRAFAC class YlqF/YawG GTPase family. RsgA subfamily. In terms of assembly, monomer. Associates with 30S ribosomal subunit, binds 16S rRNA. The cofactor is Zn(2+).

It is found in the cytoplasm. Functionally, one of several proteins that assist in the late maturation steps of the functional core of the 30S ribosomal subunit. Helps release RbfA from mature subunits. May play a role in the assembly of ribosomal proteins into the subunit. Circularly permuted GTPase that catalyzes slow GTP hydrolysis, GTPase activity is stimulated by the 30S ribosomal subunit. The polypeptide is Small ribosomal subunit biogenesis GTPase RsgA (Streptococcus pyogenes serotype M3 (strain ATCC BAA-595 / MGAS315)).